A 405-amino-acid chain; its full sequence is Tryptophan synthase beta chain (405 aa).

Position 98 is an N6-(pyridoxal phosphate)lysine (lysine 98).

Belongs to the TrpB family. In terms of assembly, tetramer of two alpha and two beta chains. The cofactor is pyridoxal 5'-phosphate.

The enzyme catalyses (1S,2R)-1-C-(indol-3-yl)glycerol 3-phosphate + L-serine = D-glyceraldehyde 3-phosphate + L-tryptophan + H2O. It participates in amino-acid biosynthesis; L-tryptophan biosynthesis; L-tryptophan from chorismate: step 5/5. In terms of biological role, the beta subunit is responsible for the synthesis of L-tryptophan from indole and L-serine. This Xanthomonas euvesicatoria pv. vesicatoria (strain 85-10) (Xanthomonas campestris pv. vesicatoria) protein is Tryptophan synthase beta chain.